The following is a 333-amino-acid chain: DNA-directed RNA polymerase subunit alpha (333 aa).

The interval 1–233 (MVREKVKVST…NLFIPFLHVE (233 aa)) is alpha N-terminal domain (alpha-NTD). The segment at 267–333 (LVFQYIFIDQ…LEKNRKFISN (67 aa)) is alpha C-terminal domain (alpha-CTD).

It belongs to the RNA polymerase alpha chain family. In terms of assembly, in plastids the minimal PEP RNA polymerase catalytic core is composed of four subunits: alpha, beta, beta', and beta''. When a (nuclear-encoded) sigma factor is associated with the core the holoenzyme is formed, which can initiate transcription.

It is found in the plastid. The protein resides in the chloroplast. The enzyme catalyses RNA(n) + a ribonucleoside 5'-triphosphate = RNA(n+1) + diphosphate. Functionally, DNA-dependent RNA polymerase catalyzes the transcription of DNA into RNA using the four ribonucleoside triphosphates as substrates. The sequence is that of DNA-directed RNA polymerase subunit alpha from Aethionema grandiflorum (Persian stone-cress).